Consider the following 421-residue polypeptide: NADH-dependent phenylglyoxylate dehydrogenase subunit epsilon (421 aa).

FAD is bound by residues 15–18 (SSHA), 39–40 (TR), and 279–297 (ATAQARGFFTGTKVMNAIL).

Belongs to the FAD-dependent oxidoreductase family. In terms of assembly, dimer of heteropentamers composed of an alpha (PadG), a beta (PadI), a gamma (PadE), a delta (PadF) and an epsilon (PadH) subunit. FAD is required as a cofactor.

The catalysed reaction is phenylglyoxylate + NAD(+) + CoA = benzoyl-CoA + CO2 + NADH. Activated by magnesium ions and thiamine diphosphate. In terms of biological role, involved in the anaerobic metabolism of phenylalanine and phenylacetate. Catalyzes the oxidative decarboxylation of phenylglyoxylate to benzoyl-CoA and CO(2). It can also react slowly with 2-oxo-3-methylbutanoate and use different electron acceptors such as benzyl viologen, methyl viologen, FAD or FMN, but NAD seems to be the physiological electron acceptor. Also catalyzes an isotope exchange between CO(2) and the carboxyl group which proves partial or complete reversibility of the oxidative decarboxylation reaction. The protein is NADH-dependent phenylglyoxylate dehydrogenase subunit epsilon (padH) of Aromatoleum evansii (Azoarcus evansii).